The sequence spans 344 residues: MIEINQVNKVFYQGSKEIHALKDINLHIAEGTIFGVIGSSGAGKSTLIRCVNMLEAPTSGSIVVDGVDLTKLSKKQLSETRRNIGMIFQHFNLLSSRTVFDNVALPLELAGKDKEQIQSKVTELLKLVGLADKHESYPANLSGGQKQRVAIARALASDPKVLLCDEATSALDPATTQSILELLKEINRKLKITILLITHEMDVVKSICHEVAIIGGGELVEKGTVGEIFAHPKTELAHDFIRSTLDLSIPEDYQVRLQPTRVAGSYPLVRLEFTGATVDAPLVSQISRKYNIDISILSSDLDYAGGVKFGMMVAELFGNEEDDNAAIEYLREHNVKVEVLGYVL.

Positions 2 to 241 (IEINQVNKVF…PKTELAHDFI (240 aa)) constitute an ABC transporter domain. 38-45 (GSSGAGKS) serves as a coordination point for ATP.

The protein belongs to the ABC transporter superfamily. Methionine importer (TC 3.A.1.24) family. In terms of assembly, the complex is composed of two ATP-binding proteins (MetN), two transmembrane proteins (MetI) and a solute-binding protein (MetQ).

It localises to the cell inner membrane. The catalysed reaction is L-methionine(out) + ATP + H2O = L-methionine(in) + ADP + phosphate + H(+). It catalyses the reaction D-methionine(out) + ATP + H2O = D-methionine(in) + ADP + phosphate + H(+). Functionally, part of the ABC transporter complex MetNIQ involved in methionine import. Responsible for energy coupling to the transport system. The chain is Methionine import ATP-binding protein MetN from Vibrio vulnificus (strain CMCP6).